The primary structure comprises 450 residues: Chromosomal replication initiator protein DnaA (450 aa).

The interval 1–84 (MTENEQIFWN…AVDYVYEEDL (84 aa)) is domain I, interacts with DnaA modulators. The domain II stretch occupies residues 84-109 (LIIEQQHQGQQGYTEQAFQQLPAVQS). A domain III, AAA+ region region spans residues 110-328 (DLNPKYSFDN…GALKDISLVA (219 aa)). The ATP site is built by G154, G156, K157, and T158. The domain IV, binds dsDNA stretch occupies residues 329 to 450 (NFKQIDTITV…EIETIKNKIK (122 aa)).

This sequence belongs to the DnaA family. As to quaternary structure, oligomerizes as a right-handed, spiral filament on DNA at oriC.

The protein localises to the cytoplasm. Its function is as follows. Plays an essential role in the initiation and regulation of chromosomal replication. ATP-DnaA binds to the origin of replication (oriC) to initiate formation of the DNA replication initiation complex once per cell cycle. Binds the DnaA box (a 9 base pair repeat at the origin) and separates the double-stranded (ds)DNA. Forms a right-handed helical filament on oriC DNA; dsDNA binds to the exterior of the filament while single-stranded (ss)DNA is stabiized in the filament's interior. The ATP-DnaA-oriC complex binds and stabilizes one strand of the AT-rich DNA unwinding element (DUE), permitting loading of DNA polymerase. After initiation quickly degrades to an ADP-DnaA complex that is not apt for DNA replication. Binds acidic phospholipids. This is Chromosomal replication initiator protein DnaA from Streptococcus equi subsp. zooepidemicus (strain MGCS10565).